The sequence spans 501 residues: Ribose import ATP-binding protein RbsA (501 aa).

2 consecutive ABC transporter domains span residues 5–241 (LELK…VGRK) and 249–495 (LNLP…VGKQ). 37-44 (GENGAGKS) contacts ATP.

The protein belongs to the ABC transporter superfamily. Ribose importer (TC 3.A.1.2.1) family. In terms of assembly, the complex is composed of an ATP-binding protein (RbsA), two transmembrane proteins (RbsC) and a solute-binding protein (RbsB).

Its subcellular location is the cell inner membrane. The enzyme catalyses D-ribose(out) + ATP + H2O = D-ribose(in) + ADP + phosphate + H(+). Part of the ABC transporter complex RbsABC involved in ribose import. Responsible for energy coupling to the transport system. The sequence is that of Ribose import ATP-binding protein RbsA from Photorhabdus laumondii subsp. laumondii (strain DSM 15139 / CIP 105565 / TT01) (Photorhabdus luminescens subsp. laumondii).